Consider the following 139-residue polypeptide: Putative pre-16S rRNA nuclease (139 aa).

The protein belongs to the YqgF nuclease family.

The protein localises to the cytoplasm. Could be a nuclease involved in processing of the 5'-end of pre-16S rRNA. This chain is Putative pre-16S rRNA nuclease, found in Streptococcus gordonii (strain Challis / ATCC 35105 / BCRC 15272 / CH1 / DL1 / V288).